A 726-amino-acid polypeptide reads, in one-letter code: Catalase-peroxidase (726 aa).

A cross-link (tryptophyl-tyrosyl-methioninium (Trp-Tyr) (with M-240)) is located at residues 91-214 (WHAAGTYRIG…LAAVQMGLIY (124 aa)). His92 acts as the Proton acceptor in catalysis. The segment at residues 214 to 240 (YVNPEGPNGNPDPVAAAIDIRETFRRM) is a cross-link (tryptophyl-tyrosyl-methioninium (Tyr-Met) (with W-91)). His255 lines the heme b pocket. Residues 335–362 (AHQWKPKGNAGAGTVPDPADPSKRRSPS) are disordered.

Belongs to the peroxidase family. Peroxidase/catalase subfamily. In terms of assembly, homodimer or homotetramer. Heme b is required as a cofactor. In terms of processing, formation of the three residue Trp-Tyr-Met cross-link is important for the catalase, but not the peroxidase activity of the enzyme.

It carries out the reaction H2O2 + AH2 = A + 2 H2O. It catalyses the reaction 2 H2O2 = O2 + 2 H2O. Its function is as follows. Bifunctional enzyme with both catalase and broad-spectrum peroxidase activity. This is Catalase-peroxidase from Cupriavidus metallidurans (strain ATCC 43123 / DSM 2839 / NBRC 102507 / CH34) (Ralstonia metallidurans).